The chain runs to 405 residues: Imidazolonepropionase (405 aa).

2 residues coordinate Fe(3+): His-72 and His-74. 2 residues coordinate Zn(2+): His-72 and His-74. Residues Arg-81, Tyr-144, and His-177 each contribute to the 4-imidazolone-5-propanoate site. Tyr-144 is a binding site for N-formimidoyl-L-glutamate. His-242 lines the Fe(3+) pocket. His-242 is a Zn(2+) binding site. 4-imidazolone-5-propanoate is bound at residue Gln-245. Asp-317 is a binding site for Fe(3+). Asp-317 provides a ligand contact to Zn(2+). 2 residues coordinate N-formimidoyl-L-glutamate: Asn-319 and Gly-321. Residue Thr-322 coordinates 4-imidazolone-5-propanoate.

The protein belongs to the metallo-dependent hydrolases superfamily. HutI family. Zn(2+) serves as cofactor. Fe(3+) is required as a cofactor.

The protein resides in the cytoplasm. The enzyme catalyses 4-imidazolone-5-propanoate + H2O = N-formimidoyl-L-glutamate. The protein operates within amino-acid degradation; L-histidine degradation into L-glutamate; N-formimidoyl-L-glutamate from L-histidine: step 3/3. Its function is as follows. Catalyzes the hydrolytic cleavage of the carbon-nitrogen bond in imidazolone-5-propanoate to yield N-formimidoyl-L-glutamate. It is the third step in the universal histidine degradation pathway. In Klebsiella pneumoniae subsp. pneumoniae (strain ATCC 700721 / MGH 78578), this protein is Imidazolonepropionase.